Reading from the N-terminus, the 179-residue chain is uncharacterized protein (179 aa).

The first 27 residues, 1–27 (MNKSMIQSGGYVLLAGLILAMSSTLFA), serve as a signal peptide directing secretion. A disulfide bond links cysteine 43 and cysteine 83.

Belongs to the fimbrial protein family.

Its subcellular location is the fimbrium. Functionally, part of the yfcOPQRSUV fimbrial operon. Could contribute to adhesion to various surfaces in specific environmental niches. Increases adhesion to eukaryotic T24 bladder epithelial cells in the absence of fim genes. This is an uncharacterized protein from Escherichia coli (strain K12).